A 71-amino-acid polypeptide reads, in one-letter code: Protein SlyX homolog (71 aa).

This sequence belongs to the SlyX family.

The protein is Protein SlyX homolog of Azotobacter vinelandii (strain DJ / ATCC BAA-1303).